The sequence spans 355 residues: Uroporphyrinogen decarboxylase (355 aa).

Substrate-binding positions include 27–31 (RQAGR), aspartate 77, tyrosine 154, threonine 209, and histidine 327.

The protein belongs to the uroporphyrinogen decarboxylase family. As to quaternary structure, homodimer.

It localises to the cytoplasm. It catalyses the reaction uroporphyrinogen III + 4 H(+) = coproporphyrinogen III + 4 CO2. It functions in the pathway porphyrin-containing compound metabolism; protoporphyrin-IX biosynthesis; coproporphyrinogen-III from 5-aminolevulinate: step 4/4. Its function is as follows. Catalyzes the decarboxylation of four acetate groups of uroporphyrinogen-III to yield coproporphyrinogen-III. This chain is Uroporphyrinogen decarboxylase, found in Aeromonas salmonicida (strain A449).